We begin with the raw amino-acid sequence, 275 residues long: Voltage-dependent calcium channel gamma-5 subunit (275 aa).

4 helical membrane passes run 8–28 (ALTLLSSVFAVCGLGLLGIAV), 103–123 (FPLVSLFFMFIGFILSNIGHI), 129–149 (ILAFVSGIFFILSGLSLVVGL), and 181–201 (FAAISFLLTESAGVMSVYLFM).

It belongs to the PMP-22/EMP/MP20 family. CACNG subfamily. As to quaternary structure, the L-type calcium channel is composed of five subunits: alpha-1, alpha-2/delta, beta and gamma. Acts as an auxiliary subunit for AMPA-selective glutamate receptors (AMPARs). Found in a complex with GRIA1, GRIA2, GRIA3, GRIA4, CNIH2, CNIH3, CACNG2, CACNG3, CACNG4, CACNG7 and CACNG8. Interacts with GRIA1, GRIA2, GRIA3 and GRIA4. In terms of tissue distribution, brain. Enriched in Bergman glia, as well as a variety of neuronal populations including locus coeruleus, olfactory bulb, lateral septal nucleus, interpeduncular nucleus, and the CA2 and rostral/medial CA1 regions of hippocampus.

It localises to the membrane. The protein resides in the postsynaptic density membrane. Regulates the gating properties of AMPA-selective glutamate receptors (AMPARs). Modulates their gating properties by accelerating their rates of activation, deactivation and desensitization. Displays subunit-specific AMPA receptor regulation. Shows specificity for GRIA1, GRIA4 and the long isoform of GRIA2. Thought to stabilize the calcium channel in an inactivated (closed) state. The chain is Voltage-dependent calcium channel gamma-5 subunit (Cacng5) from Mus musculus (Mouse).